A 302-amino-acid chain; its full sequence is Phospho-N-acetylmuramoyl-pentapeptide-transferase (302 aa).

Transmembrane regions (helical) follow at residues 1–21 (MIAASFLLNLLIYPFLINLFR), 42–62 (GTPTMGGILFVLIGLLFGVLS), 67–87 (VILTGAFLFFLIGFLDDFLSI), 101–121 (ALLQIAAASVVIAFSQPETAV), 123–143 (FFGIKLEMGAWYYLLALIVIV), 154–174 (GLDGLAGWVYISGAIPYWFFL), 178–198 (GFSENIIILLSAGVLAFLIFN), 204–224 (IFMGDTGSIALGGTLGVVSVL), 229–249 (FYLIVFFPILVVETLSVILQI), and 279–299 (IVAVFTIFNLISSLIALEVFG).

Belongs to the glycosyltransferase 4 family. MraY subfamily. Mg(2+) is required as a cofactor.

Its subcellular location is the cell inner membrane. It carries out the reaction UDP-N-acetyl-alpha-D-muramoyl-L-alanyl-gamma-D-glutamyl-meso-2,6-diaminopimeloyl-D-alanyl-D-alanine + di-trans,octa-cis-undecaprenyl phosphate = di-trans,octa-cis-undecaprenyl diphospho-N-acetyl-alpha-D-muramoyl-L-alanyl-D-glutamyl-meso-2,6-diaminopimeloyl-D-alanyl-D-alanine + UMP. It functions in the pathway cell wall biogenesis; peptidoglycan biosynthesis. In terms of biological role, catalyzes the initial step of the lipid cycle reactions in the biosynthesis of the cell wall peptidoglycan: transfers peptidoglycan precursor phospho-MurNAc-pentapeptide from UDP-MurNAc-pentapeptide onto the lipid carrier undecaprenyl phosphate, yielding undecaprenyl-pyrophosphoryl-MurNAc-pentapeptide, known as lipid I. This is Phospho-N-acetylmuramoyl-pentapeptide-transferase from Thermotoga neapolitana (strain ATCC 49049 / DSM 4359 / NBRC 107923 / NS-E).